We begin with the raw amino-acid sequence, 128 residues long: L-ectoine synthase (128 aa).

This sequence belongs to the ectoine synthase family.

The enzyme catalyses (2S)-4-acetamido-2-aminobutanoate = L-ectoine + H2O. It functions in the pathway amine and polyamine biosynthesis; ectoine biosynthesis; L-ectoine from L-aspartate 4-semialdehyde: step 3/3. In terms of biological role, catalyzes the circularization of gamma-N-acetyl-alpha,gamma-diaminobutyric acid (ADABA) to ectoine (1,4,5,6-tetrahydro-2-methyl-4-pyrimidine carboxylic acid), which is an excellent osmoprotectant. This Vibrio parahaemolyticus serotype O3:K6 (strain RIMD 2210633) protein is L-ectoine synthase.